Here is an 874-residue protein sequence, read N- to C-terminus: Chaperone protein ClpB 1 (874 aa).

One can recognise a Clp R domain in the interval 6 to 148; the sequence is PNQFTEKAWE…RQIIQQIRGS (143 aa). Repeat regions lie at residues 9–73 and 85–148; these read FTEK…IARQ and LGRS…IRGS. An NBD1 region spans residues 161-342; the sequence is EALEKYGRDL…RRFQQVFVDQ (182 aa). 208-215 serves as a coordination point for ATP; that stretch reads GEPGVGKT. The tract at residues 343-551 is linker; sequence PTVEDTISIL…IAEIISKWTG (209 aa). Positions 393–527 form a coiled coil; that stretch reads IDLVDESAAR…MEGGLATTHT (135 aa). Positions 561–772 are NBD2; it reads EMQKLLNLDE…RVDETIIFHS (212 aa). Residue 611-618 participates in ATP binding; it reads GPTGVGKT. Residues 773–874 are C-terminal; the sequence is LRKDQLQQIV…IATPTAVPLS (102 aa).

This sequence belongs to the ClpA/ClpB family. Homohexamer. The oligomerization is ATP-dependent.

The protein resides in the cytoplasm. In terms of biological role, part of a stress-induced multi-chaperone system, it is involved in the recovery of the cell from heat-induced damage, in cooperation with DnaK, DnaJ and GrpE. Acts before DnaK, in the processing of protein aggregates. Protein binding stimulates the ATPase activity; ATP hydrolysis unfolds the denatured protein aggregates, which probably helps expose new hydrophobic binding sites on the surface of ClpB-bound aggregates, contributing to the solubilization and refolding of denatured protein aggregates by DnaK. Necessary for thermotolerance. The polypeptide is Chaperone protein ClpB 1 (clpB1) (Synechococcus elongatus (strain ATCC 33912 / PCC 7942 / FACHB-805) (Anacystis nidulans R2)).